Consider the following 853-residue polypeptide: DNA mismatch repair protein MutS (853 aa).

614–621 serves as a coordination point for ATP; that stretch reads GPNMGGKS.

This sequence belongs to the DNA mismatch repair MutS family.

Functionally, this protein is involved in the repair of mismatches in DNA. It is possible that it carries out the mismatch recognition step. This protein has a weak ATPase activity. This is DNA mismatch repair protein MutS from Escherichia coli (strain SMS-3-5 / SECEC).